A 611-amino-acid chain; its full sequence is Ankyrin repeat protein SKIP35 (611 aa).

ANK repeat units lie at residues 292 to 322 (LFSN…EGGA), 323 to 353 (DNVN…RNSL), 356 to 384 (DVDL…NAIA), 385 to 414 (FLGP…DMEL), 416 to 442 (LALT…PPVL), and 445 to 478 (LSIE…DSTA).

Interacts with SKP1A/ASK1.

The polypeptide is Ankyrin repeat protein SKIP35 (SKIP35) (Arabidopsis thaliana (Mouse-ear cress)).